We begin with the raw amino-acid sequence, 702 residues long: Polyribonucleotide nucleotidyltransferase (702 aa).

2 residues coordinate Mg(2+): D487 and D493. Residues 554–613 enclose the KH domain; that stretch reads PRLLTIKIHPDKIREVIGKGGSTIQAITKETGTQIDIQDDGTIVIASVNAIAAQAAKARI. The 69-residue stretch at 623–691 folds into the S1 motif domain; that stretch reads GRIYEGKVAK…KQGRIRLSMK (69 aa).

This sequence belongs to the polyribonucleotide nucleotidyltransferase family. Component of the RNA degradosome, which is a multiprotein complex involved in RNA processing and mRNA degradation. It depends on Mg(2+) as a cofactor.

The protein resides in the cytoplasm. It carries out the reaction RNA(n+1) + phosphate = RNA(n) + a ribonucleoside 5'-diphosphate. Functionally, involved in mRNA degradation. Catalyzes the phosphorolysis of single-stranded polyribonucleotides processively in the 3'- to 5'-direction. The protein is Polyribonucleotide nucleotidyltransferase of Stenotrophomonas maltophilia (strain K279a).